Reading from the N-terminus, the 347-residue chain is MYTLARQLLFKLSPETAHELTIDLLGAGGRLGLNGLLCHRPASLPVRVMGLDFPNPVGLAAGLDKNGDAIDGLAQLGFGFVEIGTVTPRPQPGNPRPRLFRLPQAEAIVNRMGFNNLGVDHLLARVQAARYSGVLGINIGKNFDTPVERAVDDYLICLDKVYPHASYVTVNVSSPNTPGLRSLQFGDSLRQLLEALRQRQEELAGRHGRRVPLAIKIAPDMSDEETAQVARALLDTGMDAVIATNTTLGREGVEGLAHAGEAGGLSGAPVREKSTHAVRVLAGELGGRLPIVAVGGITEGRHAAEKIAAGASLVQIYTGFVYKGPALIREAVEAIAALRGERPVGTH.

FMN-binding positions include 61-65 (AGLDK) and T85. Position 65 (K65) interacts with substrate. Position 110-114 (110-114 (NRMGF)) interacts with substrate. Residues N138 and N171 each contribute to the FMN site. N171 lines the substrate pocket. S174 functions as the Nucleophile in the catalytic mechanism. Substrate is bound at residue N176. Positions 216 and 244 each coordinate FMN. Residue 245–246 (NT) coordinates substrate. FMN is bound by residues G267, G296, and 317–318 (YT).

The protein belongs to the dihydroorotate dehydrogenase family. Type 2 subfamily. As to quaternary structure, monomer. FMN is required as a cofactor.

It is found in the cell membrane. The catalysed reaction is (S)-dihydroorotate + a quinone = orotate + a quinol. It participates in pyrimidine metabolism; UMP biosynthesis via de novo pathway; orotate from (S)-dihydroorotate (quinone route): step 1/1. In terms of biological role, catalyzes the conversion of dihydroorotate to orotate with quinone as electron acceptor. In Azotobacter vinelandii (strain DJ / ATCC BAA-1303), this protein is Dihydroorotate dehydrogenase (quinone).